The primary structure comprises 309 residues: HPr kinase/phosphorylase (309 aa).

Active-site residues include H138 and K159. 153–160 serves as a coordination point for ATP; the sequence is GQSGVGKS. S160 contacts Mg(2+). D177 (proton acceptor; for phosphorylation activity. Proton donor; for dephosphorylation activity) is an active-site residue. The segment at 201–210 is important for the catalytic mechanism of both phosphorylation and dephosphorylation; that stretch reads LEIRGLGIIN. E202 is a Mg(2+) binding site. R243 is a catalytic residue. The tract at residues 264-269 is important for the catalytic mechanism of dephosphorylation; sequence PVRPGR.

It belongs to the HPrK/P family. As to quaternary structure, homohexamer. It depends on Mg(2+) as a cofactor.

The catalysed reaction is [HPr protein]-L-serine + ATP = [HPr protein]-O-phospho-L-serine + ADP + H(+). It catalyses the reaction [HPr protein]-O-phospho-L-serine + phosphate + H(+) = [HPr protein]-L-serine + diphosphate. Its function is as follows. Catalyzes the ATP- as well as the pyrophosphate-dependent phosphorylation of a specific serine residue in HPr, a phosphocarrier protein of the phosphoenolpyruvate-dependent sugar phosphotransferase system (PTS). HprK/P also catalyzes the pyrophosphate-producing, inorganic phosphate-dependent dephosphorylation (phosphorolysis) of seryl-phosphorylated HPr (P-Ser-HPr). The two antagonistic activities of HprK/P are regulated by several intracellular metabolites, which change their concentration in response to the absence or presence of rapidly metabolisable carbon sources (glucose, fructose, etc.) in the growth medium. Also phosphorylates/dephosphorylates the HPr-like catabolite repression protein crh on a specific serine residue. Therefore, by controlling the phosphorylation state of HPr and crh, HPrK/P is a sensor enzyme that plays a major role in the regulation of carbon metabolism and sugar transport: it mediates carbon catabolite repression (CCR), and regulates PTS-catalyzed carbohydrate uptake and inducer exclusion. This chain is HPr kinase/phosphorylase, found in Bacillus cereus (strain AH820).